We begin with the raw amino-acid sequence, 524 residues long: Cytochrome c nitrite reductase subunit NrfA (524 aa).

The N-terminal stretch at 1–24 is a signal peptide; that stretch reads MNNQKTFKGLRLAALGLVAVAAFT. Positions 29–39 are interaction with NrfH; it reads DVSTELKTPVY. Residues G78, E117, and A118 each coordinate Ca(2+). Residues H121, C147, C150, K151, C187, C190, and H191 each contribute to the heme site. The interval 221 to 222 is interaction with NrfH; that stretch reads RN. Residues C229, C232, and H233 each contribute to the heme site. 4 residues coordinate Ca(2+): E235, Y236, K295, and Q297. H309, C316, C319, H320, H335, C349, C352, H353, and H434 together coordinate heme. An interaction with NrfH region spans residues 318-331; it reads DCHMSYTRSDDKKK. The interaction with NrfH stretch occupies residues 351-355; sequence QCHSD.

Belongs to the cytochrome c-552 family. As to quaternary structure, component of the NrfHA cytochrome c nitrite reductase complex composed of 4 NrfA catalytic subunits and 2 NrfH quinone-binding subunits. NrfA homodimer interacts with NrfH. It depends on Ca(2+) as a cofactor. Heme is required as a cofactor.

The protein resides in the cell inner membrane. The enzyme catalyses 6 Fe(III)-[cytochrome c] + NH4(+) + 2 H2O = 6 Fe(II)-[cytochrome c] + nitrite + 8 H(+). Functionally, catalytic subunit of the cytochrome c nitrite reductase holocomplex NrfHA. Has both nitrite and sulfite reductase activities. Catalyzes the reduction of nitrite to ammonia, consuming six electrons acquired by the electron donor subunit NrfH from the menaquinone pool, in an anaerobic respiratory process of nitrite. The other biological function of the NrfHA holocomplex is to detoxify nitrite. This function is essential for the survival of this organism as it enables it to overcome inhibition by nitrite, which is produced by other organisms living in the same environment. The chain is Cytochrome c nitrite reductase subunit NrfA from Nitratidesulfovibrio vulgaris (strain ATCC 29579 / DSM 644 / CCUG 34227 / NCIMB 8303 / VKM B-1760 / Hildenborough) (Desulfovibrio vulgaris).